The chain runs to 204 residues: Ribosome maturation factor RimP (204 aa).

Belongs to the RimP family.

It localises to the cytoplasm. Functionally, required for maturation of 30S ribosomal subunits. This Allorhizobium ampelinum (strain ATCC BAA-846 / DSM 112012 / S4) (Agrobacterium vitis (strain S4)) protein is Ribosome maturation factor RimP.